Here is a 691-residue protein sequence, read N- to C-terminus: Elongation factor G (691 aa).

A tr-type G domain is found at 8–282; sequence HMVRNIGIAA…AVVDYLPAPD (275 aa). GTP contacts are provided by residues 17–24, 81–85, and 135–138; these read AHIDAGKT, DTPGH, and NKMD.

Belongs to the TRAFAC class translation factor GTPase superfamily. Classic translation factor GTPase family. EF-G/EF-2 subfamily.

It is found in the cytoplasm. Its function is as follows. Catalyzes the GTP-dependent ribosomal translocation step during translation elongation. During this step, the ribosome changes from the pre-translocational (PRE) to the post-translocational (POST) state as the newly formed A-site-bound peptidyl-tRNA and P-site-bound deacylated tRNA move to the P and E sites, respectively. Catalyzes the coordinated movement of the two tRNA molecules, the mRNA and conformational changes in the ribosome. This chain is Elongation factor G, found in Campylobacter hominis (strain ATCC BAA-381 / DSM 21671 / CCUG 45161 / LMG 19568 / NCTC 13146 / CH001A).